We begin with the raw amino-acid sequence, 861 residues long: Integrator complex subunit 6-like (861 aa).

Residues 3 to 227 form the VWFA domain; that stretch reads ILLFLIDTSA…QCLESLVQKV (225 aa). The segment at 605–626 is disordered; sequence PQNKVKRPGEPNSPMSSKRRRS. A Phosphoserine modification is found at Ser617.

In Homo sapiens (Human), this protein is Integrator complex subunit 6-like (INTS6L).